The following is a 101-amino-acid chain: Ribonuclease kappa-B (101 aa).

The next 2 helical transmembrane spans lie at 13–33 and 68–88; these read ACGI…GVFF and VSYN…FSFC.

It belongs to the RNase K family.

The protein resides in the membrane. Functionally, endoribonuclease which preferentially cleaves ApU and ApG phosphodiester bonds. The chain is Ribonuclease kappa-B (rnasek-b) from Xenopus laevis (African clawed frog).